A 284-amino-acid polypeptide reads, in one-letter code: uncharacterized protein (284 aa).

An N-terminal signal peptide occupies residues Met-1 to Ala-23.

It belongs to the surface antigen msp4 family.

This is an uncharacterized protein from Brucella suis biovar 1 (strain 1330).